We begin with the raw amino-acid sequence, 82 residues long: Cysteine proteinase inhibitor A (82 aa).

Belongs to the cystatin family.

Functionally, strong inhibitor of papain and ficin but poor inhibitor of cathepsin H, B and L. In Helianthus annuus (Common sunflower), this protein is Cysteine proteinase inhibitor A.